Consider the following 174-residue polypeptide: Repair DNA polymerase X (174 aa).

The involved in ssDNA binding stretch occupies residues 42 to 51 (REEKMLNDVD). Mg(2+) contacts are provided by Asp49 and Asp51. Residues Cys81 and Cys86 are joined by a disulfide bond. Asp100 is a Mg(2+) binding site.

The protein belongs to the DNA polymerase type-X family. Mg(2+) serves as cofactor.

Its subcellular location is the virion. The enzyme catalyses DNA(n) + a 2'-deoxyribonucleoside 5'-triphosphate = DNA(n+1) + diphosphate. In terms of biological role, error-prone polymerase lacking a proofreading 3'-5' exonuclease which catalyzes the gap-filling reaction during the DNA repair process. Specifically binds intermediates in the single-nucleotide base-excision repair process. Also catalyzes DNA polymerization with low nucleotide-insertion fidelity. Probably acts as a strategic DNA mutase, which gives rise to a rapid emergence of variants. Generates mismatched G-G pairs, in that case, the polymerase first binds the deoxynucleotide followed by mismatch formation. Together with the viral DNA ligase, fills the single nucleotide gaps generated by the AP endonuclease. Binds DNA with high affinity via the helix alphaE. The polypeptide is Repair DNA polymerase X (Ornithodoros (relapsing fever ticks)).